The primary structure comprises 90 residues: UPF0237 protein NMA1909 (90 aa).

Residues 5–83 (VITVIGKDRV…LDIRMQNEEI (79 aa)) enclose the ACT domain.

Belongs to the UPF0237 family.

The polypeptide is UPF0237 protein NMA1909 (Neisseria meningitidis serogroup A / serotype 4A (strain DSM 15465 / Z2491)).